The chain runs to 583 residues: NEDD4-binding protein 2-like 2 (583 aa).

Residues 162 to 197 (NSEKSEIDNELFQFYKEIEELEKEKDGFENSCKESE) are a coiled coil. Residues 549 to 575 (EPSHKSTQRPPPPQGRQRWGGSLGSHN) form a disordered region.

The sequence is that of NEDD4-binding protein 2-like 2 (N4BP2L2) from Homo sapiens (Human).